The chain runs to 425 residues: Serine--tRNA ligase (425 aa).

Residue 231–233 coordinates L-serine; it reads TAE. 262–264 is an ATP binding site; that stretch reads RSE. L-serine is bound at residue Glu285. 349 to 352 lines the ATP pocket; sequence EISS. L-serine is bound at residue Ser385.

This sequence belongs to the class-II aminoacyl-tRNA synthetase family. Type-1 seryl-tRNA synthetase subfamily. As to quaternary structure, homodimer. The tRNA molecule binds across the dimer.

Its subcellular location is the cytoplasm. The enzyme catalyses tRNA(Ser) + L-serine + ATP = L-seryl-tRNA(Ser) + AMP + diphosphate + H(+). The catalysed reaction is tRNA(Sec) + L-serine + ATP = L-seryl-tRNA(Sec) + AMP + diphosphate + H(+). The protein operates within aminoacyl-tRNA biosynthesis; selenocysteinyl-tRNA(Sec) biosynthesis; L-seryl-tRNA(Sec) from L-serine and tRNA(Sec): step 1/1. Its function is as follows. Catalyzes the attachment of serine to tRNA(Ser). Is also able to aminoacylate tRNA(Sec) with serine, to form the misacylated tRNA L-seryl-tRNA(Sec), which will be further converted into selenocysteinyl-tRNA(Sec). The protein is Serine--tRNA ligase of Exiguobacterium sibiricum (strain DSM 17290 / CCUG 55495 / CIP 109462 / JCM 13490 / 255-15).